The following is a 193-amino-acid chain: Interferon epsilon (193 aa).

The signal sequence occupies residues 1–21; it reads MINKSFFEIMLVLLASSTGFS. Residues cysteine 53 and cysteine 163 are joined by a disulfide bond. Asparagine 139 carries an N-linked (GlcNAc...) asparagine glycan.

This sequence belongs to the alpha/beta interferon family.

The protein localises to the secreted. In terms of biological role, type I interferon required for maintaining basal levels of IFN-regulated genes, including 2'-5'-oligoadenylate synthetase, IRF7 and ISG15, in the female reproductive tract. Directly mediates protection against viral and bacterial genital infections. The chain is Interferon epsilon (IFNE) from Sus scrofa (Pig).